Here is a 203-residue protein sequence, read N- to C-terminus: ATP-dependent Clp protease proteolytic subunit (203 aa).

Serine 103 acts as the Nucleophile in catalysis. Histidine 128 is a catalytic residue.

Belongs to the peptidase S14 family. In terms of assembly, fourteen ClpP subunits assemble into 2 heptameric rings which stack back to back to give a disk-like structure with a central cavity, resembling the structure of eukaryotic proteasomes.

The protein resides in the cytoplasm. The catalysed reaction is Hydrolysis of proteins to small peptides in the presence of ATP and magnesium. alpha-casein is the usual test substrate. In the absence of ATP, only oligopeptides shorter than five residues are hydrolyzed (such as succinyl-Leu-Tyr-|-NHMec, and Leu-Tyr-Leu-|-Tyr-Trp, in which cleavage of the -Tyr-|-Leu- and -Tyr-|-Trp bonds also occurs).. In terms of biological role, cleaves peptides in various proteins in a process that requires ATP hydrolysis. Has a chymotrypsin-like activity. Plays a major role in the degradation of misfolded proteins. The sequence is that of ATP-dependent Clp protease proteolytic subunit from Dichelobacter nodosus (strain VCS1703A).